Reading from the N-terminus, the 425-residue chain is Tryptophan synthase beta chain (425 aa).

Lys-107 bears the N6-(pyridoxal phosphate)lysine mark.

This sequence belongs to the TrpB family. As to quaternary structure, tetramer of two alpha and two beta chains. The cofactor is pyridoxal 5'-phosphate.

The enzyme catalyses (1S,2R)-1-C-(indol-3-yl)glycerol 3-phosphate + L-serine = D-glyceraldehyde 3-phosphate + L-tryptophan + H2O. Its pathway is amino-acid biosynthesis; L-tryptophan biosynthesis; L-tryptophan from chorismate: step 5/5. Its function is as follows. The beta subunit is responsible for the synthesis of L-tryptophan from indole and L-serine. This Synechococcus sp. (strain JA-2-3B'a(2-13)) (Cyanobacteria bacterium Yellowstone B-Prime) protein is Tryptophan synthase beta chain.